The sequence spans 402 residues: SH3 and cysteine-rich domain-containing protein (402 aa).

The segment at 1–47 (MIPPSSPREDGVDGLPKEAVGAEQPPSPASTSSQESKLQKLKRSLSF) is disordered. Residues 107-159 (AHAFQEYIFKKPTFCDVCNHMIVGTNAKHGLRCKACKMSIHHKCTDGLAPQRC) form a Phorbol-ester/DAG-type zinc finger. A disordered region spans residues 211–247 (QRTKKGSSGSGSDSPHRTSTSDLVEVPEEANGPGGGY). SH3 domains are found at residues 285–344 (LQMN…RLQQ) and 347–402 (KIFR…LENI).

As to quaternary structure, interacts (via SH3 domains) with CACNA1S. Interacts with CACNA1H. Interacts with CACNA1C.

The protein localises to the cytoplasm. Its subcellular location is the cytosol. It is found in the cell membrane. It localises to the sarcolemma. Functionally, promotes expression of the ion channel CACNA1H at the cell membrane, and thereby contributes to the regulation of channel activity. Plays a minor and redundant role in promoting the expression of calcium channel CACNA1S at the cell membrane, and thereby contributes to increased channel activity. Slows down the inactivation rate of the calcium channel CACNA1C. This chain is SH3 and cysteine-rich domain-containing protein (STAC), found in Homo sapiens (Human).